Here is a 289-residue protein sequence, read N- to C-terminus: ATP synthase gamma chain (289 aa).

Belongs to the ATPase gamma chain family. In terms of assembly, F-type ATPases have 2 components, CF(1) - the catalytic core - and CF(0) - the membrane proton channel. CF(1) has five subunits: alpha(3), beta(3), gamma(1), delta(1), epsilon(1). CF(0) has three main subunits: a, b and c.

It localises to the cell inner membrane. Produces ATP from ADP in the presence of a proton gradient across the membrane. The gamma chain is believed to be important in regulating ATPase activity and the flow of protons through the CF(0) complex. The polypeptide is ATP synthase gamma chain (Azorhizobium caulinodans (strain ATCC 43989 / DSM 5975 / JCM 20966 / LMG 6465 / NBRC 14845 / NCIMB 13405 / ORS 571)).